Reading from the N-terminus, the 1783-residue chain is uncharacterized protein (1783 aa).

A helical membrane pass occupies residues 16 to 36; it reads FFLLFGIIFVLFSIIFLETSI. Residues 105–119 are compositionally biased toward low complexity; that stretch reads GSDSGQSNGSGDNQN. Residues 105 to 125 form a disordered region; that stretch reads GSDSGQSNGSGDNQNKTIPRK. A run of 8 helical transmembrane segments spans residues 917–937, 967–987, 1010–1030, 1084–1104, 1660–1680, 1709–1729, 1730–1750, and 1752–1772; these read VSTV…ILLI, VFAG…AFLL, WLSF…ISWI, LFTY…AGTI, FLLG…GISM, FIPA…GVLI, GIQA…FEFL, and YMVG…YFWI.

This sequence belongs to the ABC-4 integral membrane protein family.

It localises to the cell membrane. This is an uncharacterized protein from Mycoplasma genitalium (strain ATCC 33530 / DSM 19775 / NCTC 10195 / G37) (Mycoplasmoides genitalium).